A 150-amino-acid polypeptide reads, in one-letter code: Catabolic 3-dehydroquinase 1 (150 aa).

The Proton acceptor role is filled by Tyr24. Residues Asn75, His81, and Asp88 each coordinate substrate. The active-site Proton donor is the His101. Residues 102–103 (VS) and Arg112 each bind substrate.

Belongs to the type-II 3-dehydroquinase family. Homododecamer. Adopts a ring-like structure, composed of an arrangement of two hexameric rings stacked on top of one another.

The catalysed reaction is 3-dehydroquinate = 3-dehydroshikimate + H2O. Its pathway is aromatic compound metabolism; 3,4-dihydroxybenzoate biosynthesis; 3,4-dihydroxybenzoate from 3-dehydroquinate: step 1/2. Is involved in the catabolism of quinate. Allows the utilization of quinate as carbon source via the beta-ketoadipate pathway. The chain is Catabolic 3-dehydroquinase 1 from Aspergillus fumigatus (strain ATCC MYA-4609 / CBS 101355 / FGSC A1100 / Af293) (Neosartorya fumigata).